Consider the following 1097-residue polypeptide: DNA-directed RNA polymerase subunit beta (1097 aa).

The interval 1072 to 1097 (QDVNPRRSTPSRPTYESLGVADYDED) is disordered.

The protein belongs to the RNA polymerase beta chain family. In cyanobacteria the RNAP catalytic core is composed of 2 alpha, 1 beta, 1 beta', 1 gamma and 1 omega subunit. When a sigma factor is associated with the core the holoenzyme is formed, which can initiate transcription.

The catalysed reaction is RNA(n) + a ribonucleoside 5'-triphosphate = RNA(n+1) + diphosphate. DNA-dependent RNA polymerase catalyzes the transcription of DNA into RNA using the four ribonucleoside triphosphates as substrates. This Parasynechococcus marenigrum (strain WH8102) protein is DNA-directed RNA polymerase subunit beta.